We begin with the raw amino-acid sequence, 122 residues long: Large ribosomal subunit protein uL22 (122 aa).

Belongs to the universal ribosomal protein uL22 family. As to quaternary structure, part of the 50S ribosomal subunit.

Its function is as follows. This protein binds specifically to 23S rRNA; its binding is stimulated by other ribosomal proteins, e.g. L4, L17, and L20. It is important during the early stages of 50S assembly. It makes multiple contacts with different domains of the 23S rRNA in the assembled 50S subunit and ribosome. In terms of biological role, the globular domain of the protein is located near the polypeptide exit tunnel on the outside of the subunit, while an extended beta-hairpin is found that lines the wall of the exit tunnel in the center of the 70S ribosome. In Thermosynechococcus vestitus (strain NIES-2133 / IAM M-273 / BP-1), this protein is Large ribosomal subunit protein uL22.